Here is a 434-residue protein sequence, read N- to C-terminus: Histidinol dehydrogenase (434 aa).

Residues tyrosine 130, glutamine 188, and asparagine 211 each contribute to the NAD(+) site. 3 residues coordinate substrate: serine 237, glutamine 259, and histidine 262. Positions 259 and 262 each coordinate Zn(2+). Active-site proton acceptor residues include glutamate 326 and histidine 327. Residues histidine 327, aspartate 360, glutamate 414, and histidine 419 each contribute to the substrate site. Zn(2+) is bound at residue aspartate 360. Position 419 (histidine 419) interacts with Zn(2+).

It belongs to the histidinol dehydrogenase family. In terms of assembly, homodimer. Requires Zn(2+) as cofactor.

It catalyses the reaction L-histidinol + 2 NAD(+) + H2O = L-histidine + 2 NADH + 3 H(+). It functions in the pathway amino-acid biosynthesis; L-histidine biosynthesis; L-histidine from 5-phospho-alpha-D-ribose 1-diphosphate: step 9/9. Its function is as follows. Catalyzes the sequential NAD-dependent oxidations of L-histidinol to L-histidinaldehyde and then to L-histidine. This Salmonella choleraesuis (strain SC-B67) protein is Histidinol dehydrogenase.